We begin with the raw amino-acid sequence, 338 residues long: DNA-directed RNA polymerase subunit alpha (338 aa).

The segment at 1 to 234 (MIQKNWQELI…DQLQLFINFE (234 aa)) is alpha N-terminal domain (alpha-NTD). The interval 250 to 338 (FNKNLLRKVD…ELAKKLEEPY (89 aa)) is alpha C-terminal domain (alpha-CTD).

This sequence belongs to the RNA polymerase alpha chain family. Homodimer. The RNAP catalytic core consists of 2 alpha, 1 beta, 1 beta' and 1 omega subunit. When a sigma factor is associated with the core the holoenzyme is formed, which can initiate transcription.

It carries out the reaction RNA(n) + a ribonucleoside 5'-triphosphate = RNA(n+1) + diphosphate. Functionally, DNA-dependent RNA polymerase catalyzes the transcription of DNA into RNA using the four ribonucleoside triphosphates as substrates. In Paramagnetospirillum magneticum (strain ATCC 700264 / AMB-1) (Magnetospirillum magneticum), this protein is DNA-directed RNA polymerase subunit alpha.